The following is a 248-amino-acid chain: Tetraspanin-17 (248 aa).

The Cytoplasmic segment spans residues 1 to 7 (MSEVRTG). The chain crosses the membrane as a helical span at residues 8-28 (FLTMTTIILISIGLTMMGTGL). Over 29–44 (YQKTTMSSCIRETSSQ) the chain is Extracellular. Residues 45-65 (FTLLGLLLLLIPQIGLYGICC) form a helical membrane-spanning segment. At 66–69 (RSKR) the chain is on the cytoplasmic side. Residues 70-90 (LFNFFFYGMVVLIIIVSYYSI) form a helical membrane-spanning segment. Over 91–210 (KCSIYNTTFG…ILKAIVHQWK (120 aa)) the chain is Extracellular. Asparagine 96, asparagine 109, and asparagine 141 each carry an N-linked (GlcNAc...) asparagine glycan. The chain crosses the membrane as a helical span at residues 211-231 (YLSMFAYPALVLSCISLAIAW). At 232 to 248 (SLKETIHENEDYRGSYS) the chain is on the cytoplasmic side.

Belongs to the tetraspanin (TM4SF) family.

It localises to the membrane. May be involved in the regulation of cell differentiation. In Arabidopsis thaliana (Mouse-ear cress), this protein is Tetraspanin-17 (TET17).